The sequence spans 160 residues: Putative antiporter subunit mnhE2 (160 aa).

The next 3 membrane-spanning stretches (helical) occupy residues 23–43, 55–75, and 100–120; these read FKFT…YILH, IWVA…SSIS, and SNWA…STVI.

This sequence belongs to the CPA3 antiporters (TC 2.A.63) subunit E family. As to quaternary structure, may form a heterooligomeric complex that consists of seven subunits: mnhA2, mnhB2, mnhC2, mnhD2, mnhE2, mnhF2 and mnhG2.

Its subcellular location is the cell membrane. This Staphylococcus epidermidis (strain ATCC 35984 / DSM 28319 / BCRC 17069 / CCUG 31568 / BM 3577 / RP62A) protein is Putative antiporter subunit mnhE2 (mnhE2).